The sequence spans 128 residues: Secreted RxLR effector protein RXLR-C09 (128 aa).

An N-terminal signal peptide occupies residues 1–22; sequence MRFCLVFIRLAAFVILSGGATS. A RxLR-dEER motif is present at residues 58-75; it reads RLLRLNDQADISGHDEER.

Belongs to the RxLR effector family.

It is found in the secreted. The protein localises to the host cell membrane. Its subcellular location is the host nucleus. Functionally, secreted effector that suppresses pattern-triggered immunity (PTI) in plant host. This is Secreted RxLR effector protein RXLR-C09 from Plasmopara halstedii (Downy mildew of sunflower).